The chain runs to 355 residues: Probable butyrate kinase (355 aa).

Belongs to the acetokinase family.

The protein resides in the cytoplasm. It carries out the reaction butanoate + ATP = butanoyl phosphate + ADP. The chain is Probable butyrate kinase from Listeria monocytogenes serotype 4a (strain HCC23).